We begin with the raw amino-acid sequence, 90 residues long: UPF0367 protein Npun_R4552 (90 aa).

Belongs to the UPF0367 family.

The protein is UPF0367 protein Npun_R4552 of Nostoc punctiforme (strain ATCC 29133 / PCC 73102).